The following is an 892-amino-acid chain: Translation initiation factor IF-2 (892 aa).

Residues Arg-51–Gln-296 are disordered. A compositionally biased stretch (polar residues) spans Ser-68–Val-82. Residues Glu-99 to Trp-217 show a composition bias toward basic and acidic residues. A compositionally biased stretch (polar residues) spans Gln-224–His-237. The segment covering Arg-239–Arg-254 has biased composition (basic and acidic residues). Basic residues predominate over residues Ser-255 to Asn-269. Residues Lys-270–Ala-283 are compositionally biased toward basic and acidic residues. One can recognise a tr-type G domain in the interval His-391 to Lys-560. The G1 stretch occupies residues Gly-400–Thr-407. Residue Gly-400–Thr-407 coordinates GTP. Positions Gly-425–His-429 are G2. A G3 region spans residues Asp-446–Gly-449. GTP is bound by residues Asp-446–His-450 and Asn-500–Asp-503. The G4 stretch occupies residues Asn-500–Asp-503. A G5 region spans residues Ser-536–Lys-538.

The protein belongs to the TRAFAC class translation factor GTPase superfamily. Classic translation factor GTPase family. IF-2 subfamily.

It is found in the cytoplasm. Its function is as follows. One of the essential components for the initiation of protein synthesis. Protects formylmethionyl-tRNA from spontaneous hydrolysis and promotes its binding to the 30S ribosomal subunits. Also involved in the hydrolysis of GTP during the formation of the 70S ribosomal complex. The polypeptide is Translation initiation factor IF-2 (Yersinia enterocolitica serotype O:8 / biotype 1B (strain NCTC 13174 / 8081)).